Here is a 300-residue protein sequence, read N- to C-terminus: MAWIVEQPKSQKELADRFRQLMKEEAILQIPGAHDAMAALVAKKAGFSALYLSGDAYTASRGLPDLGIVTSTEVADRAKDLVRATNLPVLVDIDTGFGGVLNVARTAQEMLEANVAAVQIEDQQLPKKCGHLNGKQLVSKEEMEQKIQAIKKVAPTLVIVARTDARANEGLNGAIERANVYIEAGADAIFPEALQSAEEFRLVAENVSAPLLANMTEFGKTPLMTAGGLQNAGFQMVIYPVTSLRVAAKAYERIFQLIKDEGTQEAGIEDMQTRKELYETISYDDFEALDKNIAKTVLGE.

Substrate is bound at residue 53-55 (SGD). Mg(2+)-binding residues include D92 and D94. Substrate contacts are provided by residues 129-130 (CG), R162, E192, 214-216 (NMT), R245, and R274.

The protein belongs to the isocitrate lyase/PEP mutase superfamily. Methylisocitrate lyase family. Mg(2+) is required as a cofactor.

It catalyses the reaction 3-hydroxybutane-1,2,3-tricarboxylate = pyruvate + succinate. Functionally, involved in the methylcitric acid cycle. Catalyzes the cleavage of 2-methylisocitrate to yield pyruvate and succinate. The polypeptide is 2-methylisocitrate lyase (Halalkalibacterium halodurans (strain ATCC BAA-125 / DSM 18197 / FERM 7344 / JCM 9153 / C-125) (Bacillus halodurans)).